We begin with the raw amino-acid sequence, 197 residues long: Holliday junction branch migration complex subunit RuvA (197 aa).

Residues 1-63 (MYAYLKGIIT…EDAHLLYGFR (63 aa)) form a domain I region. The domain II stretch occupies residues 64–142 (SEDEKKLFLS…VAGDGLPAKV (79 aa)). Residues 143–147 (AVQAS) are flexible linker. The interval 148–197 (AENQELEEAMEAMLALGYKATELKKIKKFFEGTTDTAENYIKSALKMLVK) is domain III.

It belongs to the RuvA family. Homotetramer. Forms an RuvA(8)-RuvB(12)-Holliday junction (HJ) complex. HJ DNA is sandwiched between 2 RuvA tetramers; dsDNA enters through RuvA and exits via RuvB. An RuvB hexamer assembles on each DNA strand where it exits the tetramer. Each RuvB hexamer is contacted by two RuvA subunits (via domain III) on 2 adjacent RuvB subunits; this complex drives branch migration. In the full resolvosome a probable DNA-RuvA(4)-RuvB(12)-RuvC(2) complex forms which resolves the HJ.

The protein localises to the cytoplasm. The RuvA-RuvB-RuvC complex processes Holliday junction (HJ) DNA during genetic recombination and DNA repair, while the RuvA-RuvB complex plays an important role in the rescue of blocked DNA replication forks via replication fork reversal (RFR). RuvA specifically binds to HJ cruciform DNA, conferring on it an open structure. The RuvB hexamer acts as an ATP-dependent pump, pulling dsDNA into and through the RuvAB complex. HJ branch migration allows RuvC to scan DNA until it finds its consensus sequence, where it cleaves and resolves the cruciform DNA. This is Holliday junction branch migration complex subunit RuvA from Streptococcus pneumoniae serotype 2 (strain D39 / NCTC 7466).